A 324-amino-acid chain; its full sequence is Ribose 1,5-bisphosphate isomerase (324 aa).

Residues 22–25 (RGAG) and Arg65 each bind substrate. The active-site Proton acceptor is the Cys135. 137–139 (SKA) provides a ligand contact to substrate. The Proton donor role is filled by Asp204. Lys240 is a binding site for substrate.

The protein belongs to the eIF-2B alpha/beta/delta subunits family. R15P isomerase subfamily.

The enzyme catalyses alpha-D-ribose 1,5-bisphosphate = D-ribulose 1,5-bisphosphate. Its function is as follows. Catalyzes the isomerization of ribose 1,5-bisphosphate (R15P) to ribulose 1,5-bisphosphate (RuBP), the CO(2) acceptor and substrate for RubisCO. Functions in an archaeal AMP degradation pathway, together with AMP phosphorylase and RubisCO. The polypeptide is Ribose 1,5-bisphosphate isomerase (Pyrococcus furiosus (strain ATCC 43587 / DSM 3638 / JCM 8422 / Vc1)).